Here is a 421-residue protein sequence, read N- to C-terminus: Testin (421 aa).

The region spanning 92 to 199 (MILTNPVAAK…GDVKLPREMD (108 aa)) is the PET domain. Residues 133-164 (EKQPVAGSEGAQYRKKQLAKQLPAHDQDPSKC) are disordered. Positions 155-164 (PAHDQDPSKC) are enriched in basic and acidic residues. 3 LIM zinc-binding domains span residues 234 to 297 (YSCY…CDSE), 299 to 359 (PRCA…NHAV), and 362 to 421 (QGCH…KMMS).

Belongs to the prickle / espinas / testin family. Interacts via LIM domain 1 with ZYX. Interacts (via LIM domain 3) with ENAH and VASP. Interacts with ALKBH4, talin, actin, alpha-actinin, GRIP1 and PXN. Interacts (via LIM domain 2) with ACTL7A (via N-terminus). Heterodimer with ACTL7A; the heterodimer interacts with ENAH to form a heterotrimer.

Its subcellular location is the cytoplasm. It is found in the cell junction. It localises to the focal adhesion. Its function is as follows. Scaffold protein that may play a role in cell adhesion, cell spreading and in the reorganization of the actin cytoskeleton. Plays a role in the regulation of cell proliferation. May act as a tumor suppressor. This chain is Testin (TES), found in Neofelis nebulosa (Clouded leopard).